The sequence spans 95 residues: Cytochrome b-c1 complex subunit 8, mitochondrial (95 aa).

Residues 57 to 74 (FLYVAIPFVVVWSIWTRA) form a helical membrane-spanning segment.

It belongs to the UQCRQ/QCR8 family. As to quaternary structure, component of the ubiquinol-cytochrome c oxidoreductase (cytochrome b-c1 complex, complex III, CIII), a multisubunit enzyme composed of 10 subunits. The complex is composed of 3 respiratory subunits cytochrome b (COB), cytochrome c1 (CYT1) and Rieske protein (RIP1), 2 core protein subunits COR1 and QCR2, and 5 low-molecular weight protein subunits QCR6, QCR7, QCR8, QCR9 and QCR10. The complex exists as an obligatory dimer and forms supercomplexes (SCs) in the inner mitochondrial membrane with a monomer or a dimer of cytochrome c oxidase (complex IV, CIV), resulting in 2 different assemblies (supercomplexes III(2)IV and III(2)IV(2)).

The protein localises to the membrane. Its subcellular location is the mitochondrion inner membrane. Functionally, component of the ubiquinol-cytochrome c oxidoreductase, a multisubunit transmembrane complex that is part of the mitochondrial electron transport chain which drives oxidative phosphorylation. The complex plays an important role in the uptake of multiple carbon sources present in different host niches. The chain is Cytochrome b-c1 complex subunit 8, mitochondrial from Candida albicans (strain SC5314 / ATCC MYA-2876) (Yeast).